The primary structure comprises 712 residues: MTSPVAQCASVPDSGLLCLVMLARYHGLAADPEQLRHEFAEQAFCSETIQLAARRVGLKVRRHRPAPARLPRAPLPAIALDRQGGYFVLARFEPGADQAVLIQRPGQAPARLGQAEFEALWAGELLLCACAASPTQALARFDFSWFIPALVKHRHLIGEVLLISLVLQFIALLTPLFFQVVMDKVLVNNAMETLNVIAVGFLAAILFEALLTGIRTYLFAHTSSKLDVELGARLYAHLLRLPLAYFQARRVGDSVARVRELEHIRAFLTGNAVTVLLDVVFSVVFIAVMFFYSVKLTLVVLAALPCYFLLSLVLTPVLRRRLDVKFNRGAENQAFLVETVSGIDTVKSLAVEPQWQRNWDRQLAGYVAAGLSVANVAMLANTGVTLISRLVALGVLWVGATEVVAQRMTVGELVAFNMLSGHVTQPVIRLAQLWNDFQQTGVSMQRLGDILNCRTEVAGDKAQLPALRGSIELDRVSFRYRPDAADALRNVSLRIAPGEVVGVVGRSGSGKSTLTRLIQRMFVADRGRVLIDGHDIGIVDSASLRRQLGVVLQESTLFNRSVRDNIALTRPGASMHEVVAAARLAGAHEFICQLPEGYDTMLGENGVGLSGGQRQRIGIARALIHRPRVLILDEATSALDYESEHIIQRNMRDICDGRTVIIIAHRLSAVRCADRIVVMEGGEVAECGSHETLLAAGGLYARLQALQAGEAG.

One can recognise a Peptidase C39 domain in the interval Q7–C128. Residues I157–Q439 form the ABC transmembrane type-1 domain. 6 consecutive transmembrane segments (helical) span residues V160–V180, L194–I214, A272–Y292, L298–L318, V367–I387, and L390–V410. An ABC transporter domain is found at I471 to L706. ATP is bound at residue G505–S512.

Belongs to the ABC transporter superfamily. Cyclolysin exporter (TC 3.A.1.109.2) family.

It localises to the cell membrane. Functionally, involved in the export of calmodulin-sensitive adenylate cyclase-hemolysin (cyclolysin). The sequence is that of Cyclolysin secretion/processing ATP-binding protein CyaB (cyaB) from Bordetella pertussis (strain Tohama I / ATCC BAA-589 / NCTC 13251).